Consider the following 206-residue polypeptide: AT-hook motif nuclear-localized protein 28 (206 aa).

Disordered stretches follow at residues 1–21 (METVGRPRGRPRGSKNKPKAP) and 160–206 (TEEE…PSPY). The segment at residues 5-17 (GRPRGRPRGSKNK) is a DNA-binding region (a.T hook). The segment covering 7–18 (PRGRPRGSKNKP) has biased composition (basic residues). A PPC domain is found at 27–173 (DPPMSPYILE…QRNSAEGEEE (147 aa)).

The protein localises to the nucleus. Functionally, transcription factor that specifically binds AT-rich DNA sequences related to the nuclear matrix attachment regions (MARs). This is AT-hook motif nuclear-localized protein 28 from Arabidopsis thaliana (Mouse-ear cress).